A 352-amino-acid chain; its full sequence is O(6)-methylguanine-induced apoptosis 2 (352 aa).

STPGR repeat units lie at residues 80–90 (NPGPGAYNVAR), 124–139 (PAPNAYNVYEEFFSKK), 165–171 (PAPNQYS), 205–235 (GPSPCHYKINDSLVKESTKVPVSCFKSKTSR), 244–263 (NPGPASYDPYKSSESEKKII), 286–295 (PGPGHYDIVD), and 325–335 (LPGPGAYHPEI).

This sequence belongs to the STPG1 family.

It is found in the cytoplasm. The protein localises to the nucleus. Functionally, may positively contribute to the induction of apoptosis triggered by O(6)-methylguanine. The sequence is that of O(6)-methylguanine-induced apoptosis 2 (stpg1) from Xenopus laevis (African clawed frog).